We begin with the raw amino-acid sequence, 241 residues long: Putative lipoprotein YvcA (241 aa).

Residues 1–18 (MKKIIFICFSLLLALTGG) form the signal peptide. Residue cysteine 19 is the site of N-palmitoyl cysteine attachment. Residue cysteine 19 is the site of S-diacylglycerol cysteine attachment. Residues 22–48 (NDNDKNSTNDNKTEAVKPKDMDPKDLP) form a disordered region. The span at 23–46 (DNDKNSTNDNKTEAVKPKDMDPKD) shows a compositional bias: basic and acidic residues.

Its subcellular location is the cell membrane. In terms of biological role, required for complex colony architecture. The chain is Putative lipoprotein YvcA (yvcA) from Bacillus subtilis (strain 168).